Reading from the N-terminus, the 239-residue chain is Mediator of RNA polymerase II transcription subunit 7 (239 aa).

Disordered regions lie at residues 1-21 (MSSL…PPPP) and 43-66 (LFVN…DMSV). Over residues 46–66 (NDEKGKTKGKEKKSDDRDMSV) the composition is skewed to basic and acidic residues.

It belongs to the Mediator complex subunit 7 family. In terms of assembly, component of the Mediator complex.

It localises to the nucleus. Component of the Mediator complex, a coactivator involved in the regulated transcription of nearly all RNA polymerase II-dependent genes. Mediator functions as a bridge to convey information from gene-specific regulatory proteins to the basal RNA polymerase II transcription machinery. Mediator is recruited to promoters by direct interactions with regulatory proteins and serves as a scaffold for the assembly of a functional preinitiation complex with RNA polymerase II and the general transcription factors. This is Mediator of RNA polymerase II transcription subunit 7 (MED7) from Cryptococcus neoformans var. neoformans serotype D (strain B-3501A) (Filobasidiella neoformans).